The primary structure comprises 427 residues: Enolase (427 aa).

Glutamine 163 contacts (2R)-2-phosphoglycerate. Glutamate 205 functions as the Proton donor in the catalytic mechanism. Aspartate 242, glutamate 285, and aspartate 312 together coordinate Mg(2+). (2R)-2-phosphoglycerate is bound by residues lysine 337, arginine 366, serine 367, and lysine 388. Lysine 337 serves as the catalytic Proton acceptor.

It belongs to the enolase family. Mg(2+) serves as cofactor.

It localises to the cytoplasm. The protein localises to the secreted. It is found in the cell surface. The enzyme catalyses (2R)-2-phosphoglycerate = phosphoenolpyruvate + H2O. Its pathway is carbohydrate degradation; glycolysis; pyruvate from D-glyceraldehyde 3-phosphate: step 4/5. Catalyzes the reversible conversion of 2-phosphoglycerate (2-PG) into phosphoenolpyruvate (PEP). It is essential for the degradation of carbohydrates via glycolysis. In Dechloromonas aromatica (strain RCB), this protein is Enolase.